A 307-amino-acid chain; its full sequence is 4-hydroxythreonine-4-phosphate dehydrogenase (307 aa).

The substrate site is built by His-126 and Thr-127. Residues His-156, His-195, and His-251 each contribute to the a divalent metal cation site. Residues Lys-259, Asn-268, and Arg-277 each coordinate substrate.

It belongs to the PdxA family. As to quaternary structure, homodimer. The cofactor is Zn(2+). Mg(2+) is required as a cofactor. Co(2+) serves as cofactor.

Its subcellular location is the cytoplasm. The enzyme catalyses 4-(phosphooxy)-L-threonine + NAD(+) = 3-amino-2-oxopropyl phosphate + CO2 + NADH. Its pathway is cofactor biosynthesis; pyridoxine 5'-phosphate biosynthesis; pyridoxine 5'-phosphate from D-erythrose 4-phosphate: step 4/5. In terms of biological role, catalyzes the NAD(P)-dependent oxidation of 4-(phosphooxy)-L-threonine (HTP) into 2-amino-3-oxo-4-(phosphooxy)butyric acid which spontaneously decarboxylates to form 3-amino-2-oxopropyl phosphate (AHAP). The protein is 4-hydroxythreonine-4-phosphate dehydrogenase of Helicobacter pylori (strain G27).